A 148-amino-acid polypeptide reads, in one-letter code: Large ribosomal subunit protein uL15 (148 aa).

Residues 1-57 (MRLHDLYPFPEERKTRKRVGRGSGSGLGCTSGKGNKGQNARAGGGVRPGFEGGQMPL) are disordered. Gly residues-rich tracts occupy residues 21 to 35 (RGSG…GKGN) and 42 to 52 (AGGGVRPGFEG).

The protein belongs to the universal ribosomal protein uL15 family. As to quaternary structure, part of the 50S ribosomal subunit.

Its function is as follows. Binds to the 23S rRNA. This Nitratidesulfovibrio vulgaris (strain ATCC 29579 / DSM 644 / CCUG 34227 / NCIMB 8303 / VKM B-1760 / Hildenborough) (Desulfovibrio vulgaris) protein is Large ribosomal subunit protein uL15.